Here is a 2319-residue protein sequence, read N- to C-terminus: Coagulation factor VIII (2319 aa).

The signal sequence occupies residues 1–19; that stretch reads MQIALFACFFLSLFNFCSS. Plastocyanin-like domains are found at residues 20–199 and 207–349; these read AIRR…LLVC and ERTQ…VDSC. The F5/8 type A 1 domain maps to 20–349; it reads AIRRYYLGAV…MEAYVKVDSC (330 aa). N61 is a glycosylation site (N-linked (GlcNAc...) asparagine). C173 and C199 are oxidised to a cystine. 2 N-linked (GlcNAc...) asparagine glycosylation sites follow: N233 and N259. Sulfotyrosine is present on Y367. Plastocyanin-like domains follow at residues 399-573 and 583-730; these read KTWI…LLIC and NQMM…VSSC. An F5/8 type A 2 domain is found at 399-730; that stretch reads KTWIHYISAE…MTALLKVSSC (332 aa). A glycan (N-linked (GlcNAc...) asparagine) is linked at N423. An intrachain disulfide couples C547 to C573. N601 carries N-linked (GlcNAc...) asparagine glycosylation. Residues Y737, Y738, and Y742 each carry the sulfotyrosine modification. The b stretch occupies residues 760 to 1640; sequence SFFQNTNHPN…IPPVLKRHQR (881 aa). 19 N-linked (GlcNAc...) asparagine glycosylation sites follow: N880, N958, N1015, N1022, N1026, N1044, N1076, N1087, N1136, N1161, N1192, N1255, N1268, N1273, N1274, N1302, N1316, N1340, and N1378. The disordered stretch occupies residues 1530 to 1549; it reads WNKAKRHGESIKGKTESSKN. The span at 1536–1548 shows a compositional bias: basic and acidic residues; that stretch reads HGESIKGKTESSK. Residues Y1669 and Y1687 each carry the sulfotyrosine modification. 2 Plastocyanin-like domains span residues 1683-1845 and 1855-2008; these read KTRH…LLIC and GRQV…SKQC. Residues 1683-2008 enclose the F5/8 type A 3 domain; it reads KTRHYFIAAV…TLFLVYSKQC (326 aa). The N-linked (GlcNAc...) asparagine glycan is linked to N1797. 3 disulfide bridges follow: C1819/C1845, C2008/C2156, and C2161/C2313. F5/8 type C domains lie at 2008-2156 and 2161-2313; these read CQIP…LMGC and CSIP…ILGC. Residue N2105 is glycosylated (N-linked (GlcNAc...) asparagine).

This sequence belongs to the multicopper oxidase family. In terms of assembly, interacts with vWF. vWF binding is essential for the stabilization of F8 in circulation. In terms of processing, the binding of vWF and activation depend on the sulfation of Tyr-1669. Post-translationally, proteolytically cleaved by cathepsin CTSG to produce a partially activated form. As to expression, found in most tissues.

The protein resides in the secreted. It localises to the extracellular space. Factor VIII, along with calcium and phospholipid, acts as a cofactor for factor IXa when it converts factor X to the activated form, factor Xa. This is Coagulation factor VIII (F8) from Mus musculus (Mouse).